Consider the following 351-residue polypeptide: SH3 domain-containing protein 3 (351 aa).

Coiled-coil stretches lie at residues 1–21 (MDAF…QQLA) and 193–213 (LQLA…LGKE). Residues 31 to 267 (YESSDVMVID…MVTEKQHKES (237 aa)) form the BAR domain. One can recognise an SH3 domain in the interval 281–340 (TSYFLAEVIHPFSAASEKELDLDKGDYIVVRKVSQTGWAEGECKGKAGWFPMAYIEKRQR).

As to quaternary structure, interacts with FREE1. Interacts (via SH3 domain) with DRP2A/ADL6. Binds to SH3P2. Detected in all tissues except seedlings.

It is found in the cytoplasmic vesicle. The protein resides in the clathrin-coated vesicle. May be involved in the recruitment of DRP2A to the accessory protein complex and in the negative regulation of its GTPase activity. This chain is SH3 domain-containing protein 3, found in Arabidopsis thaliana (Mouse-ear cress).